The primary structure comprises 457 residues: Protein translocase subunit SecY (457 aa).

A run of 10 helical transmembrane segments spans residues 17–37 (IFFTFSLLALCRIGVFIPVPG), 75–95 (IALGVVPYISASIIVQLLVVF), 118–138 (TRLFTLVLACVQSLLFAKFAL), 162–182 (WVFYLTTVVVMITGTLLLMWV), 195–215 (ISLIITLGILASFPSVLGSIF), 230–250 (IVSLLILCAVFVFVLMATVLI), 287–307 (VIPVIFASSLLMFPATIGQFL), 326–346 (VAYSIFYVLLIIFFTYFWTAT), 386–406 (LLGAVFLAVVAILPSILGRIL), and 412–432 (VSYFLGGTAMLIVVGVILDTM).

Belongs to the SecY/SEC61-alpha family. In terms of assembly, component of the Sec protein translocase complex. Heterotrimer consisting of SecY, SecE and SecG subunits. The heterotrimers can form oligomers, although 1 heterotrimer is thought to be able to translocate proteins. Interacts with the ribosome. Interacts with SecDF, and other proteins may be involved. Interacts with SecA.

It localises to the cell inner membrane. The central subunit of the protein translocation channel SecYEG. Consists of two halves formed by TMs 1-5 and 6-10. These two domains form a lateral gate at the front which open onto the bilayer between TMs 2 and 7, and are clamped together by SecE at the back. The channel is closed by both a pore ring composed of hydrophobic SecY resides and a short helix (helix 2A) on the extracellular side of the membrane which forms a plug. The plug probably moves laterally to allow the channel to open. The ring and the pore may move independently. In Chlamydia trachomatis serovar D (strain ATCC VR-885 / DSM 19411 / UW-3/Cx), this protein is Protein translocase subunit SecY.